A 431-amino-acid chain; its full sequence is MAKLLRLNAIDGDMPGAGEADLFTLAPGGKAYVPFAWGSRVLGCKPPPAHGAARERGSVSLRPHQKGVLKEAWGHVTSKGYCMLKCPPGFGKTFMALELWRRLGLPALVLTNRRVLATQWRDSATRFLPDSRVFTSGTPPPDALPRDLYVTGPASLRNRRIKAKDSPAKFLLIVDEAHQLTSPVSCRVLLSVRPSHLLGLSATPMRYDDYHAALGAFFGREDSTVDRVDPRPHEVEILSTGVHIEPEFSKITGKMDWNSVIKAQSDNPERDAALADRMLLRPDVKWLVLCKRVDHVKRMAETLSSRSGKKVDVLHGSKDEWDRDAWCVVGTYSKAGTGFDACERTGLCLAADVDRYFEQCLGRLRANGGTVLDPVDDLGVLRKHSKNREAVYIAAGCTIKKTKCDASRPSQSTPTPTGSSQPAPRTRRPQR.

Positions 73-222 constitute a Helicase ATP-binding domain; that stretch reads WGHVTSKGYC…ALGAFFGRED (150 aa). 86–93 serves as a coordination point for ATP; the sequence is CPPGFGKT. A DEAH box motif is present at residues 175–178; it reads DEAH. The interval 403–431 is disordered; that stretch reads KCDASRPSQSTPTPTGSSQPAPRTRRPQR. The span at 407–424 shows a compositional bias: low complexity; the sequence is SRPSQSTPTPTGSSQPAP.

This is Putative helicase 055L from Frog virus 3 (isolate Goorha) (FV-3).